Here is a 250-residue protein sequence, read N- to C-terminus: MDTLRVEVVTLFPEMFSAITEYGITSRAVKQGLLQVTCWNPRDYTTDRHHTVDDRPFGGGPGMVMKIKPLEDALASARQATGAAAKVIYLSPQGRKLTQQAVKGLAEQESLILIAGRYEGIDERFIEAHVDEEWSIGDYVLSGGELPAMVLIDAVTRLLPGALGHVDSAEEDSFTDGLLDCPHYTRPEVYADQRVPDVLLSGNHAHIRRWRMKQSLGRTFERRADLLESRSLSGEEKKLLEEYLRERDDS.

Residues Gly116 and 136–141 (IGDYVL) each bind S-adenosyl-L-methionine.

The protein belongs to the RNA methyltransferase TrmD family. As to quaternary structure, homodimer.

It is found in the cytoplasm. It catalyses the reaction guanosine(37) in tRNA + S-adenosyl-L-methionine = N(1)-methylguanosine(37) in tRNA + S-adenosyl-L-homocysteine + H(+). Specifically methylates guanosine-37 in various tRNAs. This Pseudomonas entomophila (strain L48) protein is tRNA (guanine-N(1)-)-methyltransferase.